Reading from the N-terminus, the 327-residue chain is Phosphoenolpyruvate transferase (327 aa).

Position 59 (Asp-59) interacts with 7,8-didemethyl-8-hydroxy-5-deazariboflavin.

The protein belongs to the CofD family. As to quaternary structure, homodimer. Requires Mg(2+) as cofactor.

It catalyses the reaction enolpyruvoyl-2-diphospho-5'-guanosine + 7,8-didemethyl-8-hydroxy-5-deazariboflavin = dehydro coenzyme F420-0 + GMP + H(+). Its pathway is cofactor biosynthesis; coenzyme F420 biosynthesis. In terms of biological role, catalyzes the transfer of the phosphoenolpyruvate moiety from enoylpyruvoyl-2-diphospho-5'-guanosine (EPPG) to 7,8-didemethyl-8-hydroxy-5-deazariboflavin (FO) with the formation of dehydro coenzyme F420-0 and GMP. The protein is Phosphoenolpyruvate transferase of Mycolicibacterium smegmatis (strain ATCC 700084 / mc(2)155) (Mycobacterium smegmatis).